Here is a 384-residue protein sequence, read N- to C-terminus: Succinyl-diaminopimelate desuccinylase (384 aa).

H75 contacts Zn(2+). The active site involves D77. Residue D108 participates in Zn(2+) binding. Catalysis depends on E142, which acts as the Proton acceptor. The Zn(2+) site is built by E143, E171, and H357.

This sequence belongs to the peptidase M20A family. DapE subfamily. In terms of assembly, homodimer. The cofactor is Zn(2+). It depends on Co(2+) as a cofactor.

It carries out the reaction N-succinyl-(2S,6S)-2,6-diaminopimelate + H2O = (2S,6S)-2,6-diaminopimelate + succinate. It participates in amino-acid biosynthesis; L-lysine biosynthesis via DAP pathway; LL-2,6-diaminopimelate from (S)-tetrahydrodipicolinate (succinylase route): step 3/3. Catalyzes the hydrolysis of N-succinyl-L,L-diaminopimelic acid (SDAP), forming succinate and LL-2,6-diaminopimelate (DAP), an intermediate involved in the bacterial biosynthesis of lysine and meso-diaminopimelic acid, an essential component of bacterial cell walls. This chain is Succinyl-diaminopimelate desuccinylase, found in Shewanella oneidensis (strain ATCC 700550 / JCM 31522 / CIP 106686 / LMG 19005 / NCIMB 14063 / MR-1).